Consider the following 428-residue polypeptide: Pyruvate kinase (428 aa).

Residue arginine 34 participates in substrate binding. 4 residues coordinate K(+): asparagine 36, serine 38, aspartate 68, and threonine 69. Residue 36–39 participates in ATP binding; it reads NFSH. 2 residues coordinate ATP: arginine 75 and lysine 152. Glutamate 214 is a Mg(2+) binding site. 3 residues coordinate substrate: glycine 237, aspartate 238, and threonine 270. Aspartate 238 contacts Mg(2+).

Belongs to the pyruvate kinase family. Homotetramer. Mg(2+) is required as a cofactor. Requires K(+) as cofactor.

The enzyme catalyses pyruvate + ATP = phosphoenolpyruvate + ADP + H(+). It participates in carbohydrate degradation; glycolysis; pyruvate from D-glyceraldehyde 3-phosphate: step 5/5. This chain is Pyruvate kinase (PYK1), found in Encephalitozoon cuniculi (strain GB-M1) (Microsporidian parasite).